A 436-amino-acid polypeptide reads, in one-letter code: Na(+)/H(+) antiporter NhaA 1 (436 aa).

A run of 11 helical transmembrane segments spans residues 35 to 55, 80 to 100, 116 to 136, 147 to 167, 176 to 196, 201 to 221, 226 to 246, 283 to 303, 313 to 333, 354 to 374, and 385 to 405; these read FGGG…NSPW, LATW…GLEL, ALPV…YVGV, GWAI…AVIG, AFLL…IAIF, FKLT…LLVQ, WWWA…ESGV, VSAG…SLRG, PIVV…IFGS, LLGV…IGEL, and VKAA…IVLI.

The protein belongs to the NhaA Na(+)/H(+) (TC 2.A.33) antiporter family.

Its subcellular location is the cell membrane. It carries out the reaction Na(+)(in) + 2 H(+)(out) = Na(+)(out) + 2 H(+)(in). Functionally, na(+)/H(+) antiporter that extrudes sodium in exchange for external protons. The sequence is that of Na(+)/H(+) antiporter NhaA 1 from Salinispora tropica (strain ATCC BAA-916 / DSM 44818 / JCM 13857 / NBRC 105044 / CNB-440).